The following is a 294-amino-acid chain: Glyceraldehyde-3-phosphate dehydrogenase (294 aa).

Residues aspartate 19, arginine 63, and threonine 105 each coordinate NAD(+). D-glyceraldehyde 3-phosphate is bound by residues 134–136 and threonine 165; that span reads SCT. Cysteine 135 acts as the Nucleophile in catalysis. A disordered region spans residues 169–188; sequence KTVDGPSHKDWRGGRGASQN. Residues 194 to 195 and arginine 217 contribute to the D-glyceraldehyde 3-phosphate site; that span reads TG.

Belongs to the glyceraldehyde-3-phosphate dehydrogenase family. Homotetramer.

Its subcellular location is the cytoplasm. The enzyme catalyses D-glyceraldehyde 3-phosphate + phosphate + NAD(+) = (2R)-3-phospho-glyceroyl phosphate + NADH + H(+). Its pathway is carbohydrate degradation; glycolysis; pyruvate from D-glyceraldehyde 3-phosphate: step 1/5. Functionally, catalyzes the oxidative phosphorylation of glyceraldehyde 3-phosphate (G3P) to 1,3-bisphosphoglycerate (BPG) using the cofactor NAD. The first reaction step involves the formation of a hemiacetal intermediate between G3P and a cysteine residue, and this hemiacetal intermediate is then oxidized to a thioester, with concomitant reduction of NAD to NADH. The reduced NADH is then exchanged with the second NAD, and the thioester is attacked by a nucleophilic inorganic phosphate to produce BPG. The sequence is that of Glyceraldehyde-3-phosphate dehydrogenase (gap) from Citrobacter freundii.